Reading from the N-terminus, the 262-residue chain is Small ribosomal subunit protein eS1 (262 aa).

This sequence belongs to the eukaryotic ribosomal protein eS1 family. In terms of assembly, component of the small ribosomal subunit. Mature ribosomes consist of a small (40S) and a large (60S) subunit. The 40S subunit contains about 33 different proteins and 1 molecule of RNA (18S). The 60S subunit contains about 49 different proteins and 3 molecules of RNA (25S, 5.8S and 5S).

It is found in the cytoplasm. This is Small ribosomal subunit protein eS1 from Plasmodium vivax (strain Salvador I).